Reading from the N-terminus, the 60-residue chain is Potassium channel toxin alpha-KTx 3.16 (60 aa).

The N-terminal stretch at 1–23 (MKVFSAVLIILFVCSMIIGISEG) is a signal peptide. 3 disulfide bridges follow: Cys-30–Cys-50, Cys-36–Cys-55, and Cys-40–Cys-57.

It belongs to the short scorpion toxin superfamily. Potassium channel inhibitor family. Alpha-KTx 03 subfamily. Expressed by the venom gland.

It is found in the secreted. Functionally, potassium channel inhibitor. The protein is Potassium channel toxin alpha-KTx 3.16 of Mesobuthus gibbosus (Mediterranean checkered scorpion).